The primary structure comprises 509 residues: Lanosterol 14-alpha demethylase (509 aa).

Residues 30-50 form a helical membrane-spanning segment; it reads GNLLSMLLIACAFTLSLVYLF. C455 contributes to the heme binding site.

It belongs to the cytochrome P450 family. Heme serves as cofactor. Ubiquitinated by MARCHF6, leading to proteasomal degradation.

It is found in the endoplasmic reticulum membrane. The protein resides in the microsome membrane. It catalyses the reaction a 14alpha-methyl steroid + 3 reduced [NADPH--hemoprotein reductase] + 3 O2 = a Delta(14) steroid + formate + 3 oxidized [NADPH--hemoprotein reductase] + 4 H2O + 4 H(+). The enzyme catalyses lanosterol + 3 reduced [NADPH--hemoprotein reductase] + 3 O2 = 4,4-dimethyl-5alpha-cholesta-8,14,24-trien-3beta-ol + formate + 3 oxidized [NADPH--hemoprotein reductase] + 4 H2O + 4 H(+). It carries out the reaction 24,25-dihydrolanosterol + 3 reduced [NADPH--hemoprotein reductase] + 3 O2 = 4,4-dimethyl-8,14-cholestadien-3beta-ol + formate + 3 oxidized [NADPH--hemoprotein reductase] + 4 H2O + 4 H(+). The catalysed reaction is a 14alpha-methyl steroid + reduced [NADPH--hemoprotein reductase] + O2 = a 14alpha-hydroxymethyl steroid + oxidized [NADPH--hemoprotein reductase] + H2O + H(+). It catalyses the reaction a 14alpha-hydroxymethyl steroid + reduced [NADPH--hemoprotein reductase] + O2 = a 14alpha-formyl steroid + oxidized [NADPH--hemoprotein reductase] + 2 H2O + H(+). The enzyme catalyses a 14alpha-formyl steroid + reduced [NADPH--hemoprotein reductase] + O2 = a Delta(14) steroid + formate + oxidized [NADPH--hemoprotein reductase] + H2O + 2 H(+). It carries out the reaction lanosterol + reduced [NADPH--hemoprotein reductase] + O2 = 32-hydroxylanosterol + oxidized [NADPH--hemoprotein reductase] + H2O + H(+). The catalysed reaction is 32-hydroxylanosterol + reduced [NADPH--hemoprotein reductase] + O2 = 32-oxolanosterol + oxidized [NADPH--hemoprotein reductase] + 2 H2O + H(+). It catalyses the reaction 32-oxolanosterol + reduced [NADPH--hemoprotein reductase] + O2 = 4,4-dimethyl-5alpha-cholesta-8,14,24-trien-3beta-ol + formate + oxidized [NADPH--hemoprotein reductase] + H2O + 2 H(+). The enzyme catalyses 24,25-dihydrolanosterol + reduced [NADPH--hemoprotein reductase] + O2 = 32-hydroxy-24,25-dihydrolanosterol + oxidized [NADPH--hemoprotein reductase] + H2O + H(+). It carries out the reaction 32-hydroxy-24,25-dihydrolanosterol + reduced [NADPH--hemoprotein reductase] + O2 = 32-oxo-24,25-dihydrolanosterol + oxidized [NADPH--hemoprotein reductase] + 2 H2O + H(+). The catalysed reaction is 32-oxo-24,25-dihydrolanosterol + reduced [NADPH--hemoprotein reductase] + O2 = 4,4-dimethyl-8,14-cholestadien-3beta-ol + formate + oxidized [NADPH--hemoprotein reductase] + H2O + 2 H(+). It participates in steroid biosynthesis; zymosterol biosynthesis; zymosterol from lanosterol: step 1/6. With respect to regulation, inhibited by azalanstat. Inhibited by azole antifungal agents ketoconazole, itraconazole and fluconazole. Its function is as follows. Sterol 14alpha-demethylase that plays a critical role in the cholesterol biosynthesis pathway, being cholesterol the major sterol component in mammalian membranes as well as a precursor for bile acid and steroid hormone synthesis. Cytochrome P450 monooxygenase that catalyzes the three-step oxidative removal of the 14alpha-methyl group (C-32) of sterols such as lanosterol (lanosta-8,24-dien-3beta-ol) and 24,25-dihydrolanosterol (DHL) in the form of formate, and converts the sterols to 4,4-dimethyl-5alpha-cholesta-8,14,24-trien-3beta-ol and 4,4-dimethyl-8,14-cholestadien-3beta-ol, respectively, which are intermediates of cholesterol biosynthesis. Can also demethylate substrates not intrinsic to mammals, such as eburicol (24-methylene-24,25-dihydrolanosterol), but at a lower rate than DHL. The sequence is that of Lanosterol 14-alpha demethylase from Macaca fascicularis (Crab-eating macaque).